Consider the following 412-residue polypeptide: Glutamyl-tRNA reductase (412 aa).

Residues 52–55 (TCNR), Ser-108, 113–115 (EYE), and Gln-119 contribute to the substrate site. Cys-53 acts as the Nucleophile in catalysis. 189-194 (GAGEIG) lines the NADP(+) pocket.

It belongs to the glutamyl-tRNA reductase family. As to quaternary structure, homodimer.

It catalyses the reaction (S)-4-amino-5-oxopentanoate + tRNA(Glu) + NADP(+) = L-glutamyl-tRNA(Glu) + NADPH + H(+). It functions in the pathway porphyrin-containing compound metabolism; protoporphyrin-IX biosynthesis; 5-aminolevulinate from L-glutamyl-tRNA(Glu): step 1/2. In terms of biological role, catalyzes the NADPH-dependent reduction of glutamyl-tRNA(Glu) to glutamate 1-semialdehyde (GSA). This chain is Glutamyl-tRNA reductase, found in Sulfurisphaera tokodaii (strain DSM 16993 / JCM 10545 / NBRC 100140 / 7) (Sulfolobus tokodaii).